We begin with the raw amino-acid sequence, 522 residues long: Cytochrome P450 714C2 (522 aa).

Over 1-11 (MELFSSQQWLA) the chain is Lumenal. The chain crosses the membrane as a helical; Signal-anchor for type III membrane protein span at residues 12–32 (LLPPIILCILLFSYVYIILWL). Residues 33-522 (RPERLRQKLR…KGVPLIFREL (490 aa)) are Cytoplasmic-facing. Cys-470 contributes to the heme binding site.

It belongs to the cytochrome P450 family. Requires heme as cofactor.

It localises to the membrane. Functionally, probably not involved in gibberellin metabolism since over-expression of CYP714C2 in a heterologous system does not induce semi-dwarfism. The polypeptide is Cytochrome P450 714C2 (CYP714C2) (Oryza sativa subsp. japonica (Rice)).